The chain runs to 113 residues: Dynein light chain Tctex-type 1 (113 aa).

An N-acetylmethionine modification is found at Met1. Residues 41-113 form an interaction with GNB1 region; it reads QWTTNVVEQT…CIVSAFGLSI (73 aa).

Belongs to the dynein light chain Tctex-type family. As to quaternary structure, homodimer. The cytoplasmic dynein 1 complex consists of two catalytic heavy chains (HCs) and a number of non-catalytic subunits presented by intermediate chains (ICs), light intermediate chains (LICs) and light chains (LCs); the composition seems to vary in respect to the IC, LIC and LC composition. The heavy chain homodimer serves as a scaffold for the probable homodimeric assembly of the non-catalytic subunits. The ICs and LICs bind directly to the HC dimer and the LCs assemble on the IC dimer. DYNLT1 and DYNLT3 compete for association with dynein IC (DYNC1I1 or DYNC1I2). Self-associates. Interacts with RHO. Interacts with DYNC1I1 and DYNC1I2. Interacts with DOC2A, DOC2B and SCN10A. Interacts with PVR. Interacts with SVIL isoform 2. Interacts with GNB1; the interaction occurs in presence of guanine nucleotide-binding protein G(T) subunit gamma; the interaction diminishes the association of DYNLT1 with dynein IC (DYNC1I1 or DYNC1I2). Interacts with GNB2, GNB3 and GNB5; the interactions occur in presence of guanine nucleotide-binding protein G(T) subunit gamma. Interacts with ACVR2B and ARHGEF2. Interacts with DNAI4. Interacts with CFAP61. Phosphorylated by BMPR2. The phosphorylation status is proposed to regulate the association with the cytoplasmic dynein complex and may have role in cytoplasmic dynein cargo release.

The protein localises to the golgi apparatus. The protein resides in the cytoplasm. Its subcellular location is the cytoskeleton. It localises to the spindle. In terms of biological role, acts as one of several non-catalytic accessory components of the cytoplasmic dynein 1 complex that are thought to be involved in linking dynein to cargos and to adapter proteins that regulate dynein function. Cytoplasmic dynein 1 acts as a motor for the intracellular retrograde motility of vesicles and organelles along microtubules. Binds to transport cargos and is involved in apical cargo transport such as rhodopsin-bearing vesicles in polarized epithelia. May also be a accessory component of axonemal dynein. Functionally, plays a role in neuronal morphogenesis; the function is independent of cytoplasmic dynein and seems to be coupled to regulation of the actin cytoskeleton by enhancing Rac1 activity. The function in neurogenesis may be regulated by association with a G-protein beta-gamma dimer. May function as a receptor-independent activator of heterotrimeric G-protein signaling; the activation appears to be independent of a nucleotide exchange. Plays a role in regulating neurogenesis; inhibits the genesis of neurons from precursor cells during cortical development presumably by antagonizing ARHGEF2. Involved in the regulation of mitotic spindle orientation. Unrelated to the role in retrograde microtubule-associated movement may play a role in the dimerization of cytoplasmic proteins/domains such as for ACVR2B. Binds to the cytoplasmic domain of ACVR2B and, in vitro, inhibits ACVR2B signaling. This Bos taurus (Bovine) protein is Dynein light chain Tctex-type 1 (DYNLT1).